The sequence spans 173 residues: Ferric citrate uptake sigma factor FecI (173 aa).

The short motif at 40–52 (DIAQDTFLRVMVS) is the Polymerase core binding element. A DNA-binding region (H-T-H motif) is located at residues 139 to 158 (YSEIAHKLGVSISSVKKYVA).

This sequence belongs to the sigma-70 factor family. ECF subfamily. As to quaternary structure, interacts with FecR (via cytoplasmic N-terminus).

Its function is as follows. Sigma factors are initiation factors that promote the attachment of RNA polymerase to specific initiation sites and are then released. This sigma factor regulates transcriptional activation of the fecABCDE operon which mediates ferric citrate transport. This chain is Ferric citrate uptake sigma factor FecI (fecI), found in Escherichia coli (strain K12).